We begin with the raw amino-acid sequence, 295 residues long: Pyridoxal 5'-phosphate synthase subunit PdxS (295 aa).

D25 contacts D-ribose 5-phosphate. Catalysis depends on K82, which acts as the Schiff-base intermediate with D-ribose 5-phosphate. Residue G154 participates in D-ribose 5-phosphate binding. Residue R166 coordinates D-glyceraldehyde 3-phosphate. D-ribose 5-phosphate-binding positions include G215 and G236–S237.

Belongs to the PdxS/SNZ family. As to quaternary structure, in the presence of PdxT, forms a dodecamer of heterodimers.

It catalyses the reaction aldehydo-D-ribose 5-phosphate + D-glyceraldehyde 3-phosphate + L-glutamine = pyridoxal 5'-phosphate + L-glutamate + phosphate + 3 H2O + H(+). It functions in the pathway cofactor biosynthesis; pyridoxal 5'-phosphate biosynthesis. In terms of biological role, catalyzes the formation of pyridoxal 5'-phosphate from ribose 5-phosphate (RBP), glyceraldehyde 3-phosphate (G3P) and ammonia. The ammonia is provided by the PdxT subunit. Can also use ribulose 5-phosphate and dihydroxyacetone phosphate as substrates, resulting from enzyme-catalyzed isomerization of RBP and G3P, respectively. The sequence is that of Pyridoxal 5'-phosphate synthase subunit PdxS from Actinobacillus pleuropneumoniae serotype 3 (strain JL03).